A 511-amino-acid chain; its full sequence is 2,3-bisphosphoglycerate-independent phosphoglycerate mutase (511 aa).

Aspartate 12 is a binding site for Mn(2+). Residue tyrosine 36 is modified to Phosphotyrosine. Serine 62 provides a ligand contact to Mn(2+). Residue serine 62 is the Phosphoserine intermediate of the active site. Substrate is bound by residues histidine 123, 153 to 154 (RD), arginine 185, arginine 191, 261 to 264 (RPDR), and lysine 336. The Mn(2+) site is built by aspartate 403, histidine 407, aspartate 444, histidine 445, and histidine 462.

Belongs to the BPG-independent phosphoglycerate mutase family. As to quaternary structure, monomer. It depends on Mn(2+) as a cofactor.

It catalyses the reaction (2R)-2-phosphoglycerate = (2R)-3-phosphoglycerate. It functions in the pathway carbohydrate degradation; glycolysis; pyruvate from D-glyceraldehyde 3-phosphate: step 3/5. In terms of biological role, catalyzes the interconversion of 2-phosphoglycerate and 3-phosphoglycerate. This is 2,3-bisphosphoglycerate-independent phosphoglycerate mutase from Geobacillus thermodenitrificans (strain NG80-2).